A 423-amino-acid chain; its full sequence is Replication factor C large subunit (423 aa).

Residue Gly63–Thr70 coordinates ATP.

This sequence belongs to the activator 1 small subunits family. RfcL subfamily. In terms of assembly, heteromultimer composed of small subunits (RfcS) and large subunits (RfcL).

Functionally, part of the RFC clamp loader complex which loads the PCNA sliding clamp onto DNA. The chain is Replication factor C large subunit from Pyrobaculum islandicum (strain DSM 4184 / JCM 9189 / GEO3).